The sequence spans 223 residues: Small ribosomal subunit protein uS3 (223 aa).

Residues 38 to 106 (IKKYLKSKLA…EVHLNIVEIR (69 aa)) enclose the KH type-2 domain.

Belongs to the universal ribosomal protein uS3 family. In terms of assembly, part of the 30S ribosomal subunit. Forms a tight complex with proteins S10 and S14.

Binds the lower part of the 30S subunit head. Binds mRNA in the 70S ribosome, positioning it for translation. The chain is Small ribosomal subunit protein uS3 from Rhodospirillum rubrum (strain ATCC 11170 / ATH 1.1.1 / DSM 467 / LMG 4362 / NCIMB 8255 / S1).